Here is a 451-residue protein sequence, read N- to C-terminus: Chaperone SurA (451 aa).

Residues 1 to 26 (MKKIIPTNLFKLISILFILTPFFAWS) form the signal peptide. PpiC domains follow at residues 179–280 (DVEY…QLQG) and 290–388 (KQYH…FLDG).

The protein resides in the periplasm. The enzyme catalyses [protein]-peptidylproline (omega=180) = [protein]-peptidylproline (omega=0). Functionally, chaperone involved in the correct folding and assembly of outer membrane proteins. Recognizes specific patterns of aromatic residues and the orientation of their side chains, which are found more frequently in integral outer membrane proteins. May act in both early periplasmic and late outer membrane-associated steps of protein maturation. This Hydrogenovibrio crunogenus (strain DSM 25203 / XCL-2) (Thiomicrospira crunogena) protein is Chaperone SurA.